A 462-amino-acid polypeptide reads, in one-letter code: tRNA modification GTPase MnmE (462 aa).

Residues arginine 27, glutamate 89, and arginine 128 each contribute to the (6S)-5-formyl-5,6,7,8-tetrahydrofolate site. The region spanning 224–383 is the TrmE-type G domain; sequence GLATAIVGRP…LEAQIAKLFF (160 aa). Asparagine 234 lines the K(+) pocket. Residues 234–239, 253–259, and 278–281 each bind GTP; these read NVGKSS, TDVAGTT, and DTAG. Serine 238 lines the Mg(2+) pocket. The K(+) site is built by threonine 253, valine 255, and threonine 258. Residue threonine 259 coordinates Mg(2+). Lysine 462 contacts (6S)-5-formyl-5,6,7,8-tetrahydrofolate.

The protein belongs to the TRAFAC class TrmE-Era-EngA-EngB-Septin-like GTPase superfamily. TrmE GTPase family. As to quaternary structure, homodimer. Heterotetramer of two MnmE and two MnmG subunits. It depends on K(+) as a cofactor.

Its subcellular location is the cytoplasm. In terms of biological role, exhibits a very high intrinsic GTPase hydrolysis rate. Involved in the addition of a carboxymethylaminomethyl (cmnm) group at the wobble position (U34) of certain tRNAs, forming tRNA-cmnm(5)s(2)U34. The chain is tRNA modification GTPase MnmE from Latilactobacillus sakei subsp. sakei (strain 23K) (Lactobacillus sakei subsp. sakei).